The chain runs to 329 residues: Ig gamma-2 chain C region (329 aa).

Disulfide bonds link Cys-28-Cys-79, Cys-142-Cys-202, and Cys-248-Cys-308. The N-linked (GlcNAc...) asparagine glycan is linked to Asn-178.

The protein resides in the secreted. The protein is Ig gamma-2 chain C region of Cavia porcellus (Guinea pig).